We begin with the raw amino-acid sequence, 162 residues long: Small ribosomal subunit protein uS7m (162 aa).

Belongs to the universal ribosomal protein uS7 family. In terms of assembly, part of the small ribosomal subunit.

The protein resides in the mitochondrion. Its function is as follows. One of the primary rRNA binding proteins, it binds directly to 16S-like rRNA where it nucleates assembly of the head domain of the small subunit. This Dictyostelium citrinum (Slime mold) protein is Small ribosomal subunit protein uS7m (mrps7).